The primary structure comprises 385 residues: Tryptophan--tRNA ligase (385 aa).

The 'HIGH' region motif lies at 82–90; it reads PSGPMHIGH. The 'KMSKS' region signature appears at 253–257; sequence KMSAS.

It belongs to the class-I aminoacyl-tRNA synthetase family.

It localises to the cytoplasm. The catalysed reaction is tRNA(Trp) + L-tryptophan + ATP = L-tryptophyl-tRNA(Trp) + AMP + diphosphate + H(+). The chain is Tryptophan--tRNA ligase from Pyrococcus furiosus (strain ATCC 43587 / DSM 3638 / JCM 8422 / Vc1).